Reading from the N-terminus, the 37-residue chain is Large ribosomal subunit protein bL36 (37 aa).

The protein belongs to the bacterial ribosomal protein bL36 family.

This Nostoc sp. (strain PCC 7120 / SAG 25.82 / UTEX 2576) protein is Large ribosomal subunit protein bL36.